Reading from the N-terminus, the 1902-residue chain is PI-type proteinase (1902 aa).

The first 33 residues, 1-33 (MQRKKKGLSILLAGTVALGALAVLPVGEIQAKA), serve as a signal peptide directing secretion. A propeptide spanning residues 34–187 (AISQQTKGSS…VTLAKVYYPT (154 aa)) is cleaved from the precursor. A Peptidase S8 domain is found at 191–697 (ANSMANVQAV…AGLVDVKAAI (507 aa)). Catalysis depends on charge relay system residues Asp217, His281, and Ser620. A disordered region spans residues 1796–1874 (GKGDGTTGTS…GALPKTGETT (79 aa)). Residues 1797 to 1812 (KGDGTTGTSDKGGGQG) show a composition bias toward gly residues. Positions 1830–1843 (SQPSSGGNIPTNPA) are enriched in polar residues. The short motif at 1867-1871 (LPKTG) is the LPXTG sorting signal element. Thr1870 bears the Pentaglycyl murein peptidoglycan amidated threonine mark. Residues 1871–1902 (GETTERPAFGFLGVIVVILMGVLGLKRKQREE) constitute a propeptide, removed by sortase.

This sequence belongs to the peptidase S8 family.

It is found in the secreted. It localises to the cell wall. It carries out the reaction Endopeptidase activity with very broad specificity, although some subsite preference have been noted, e.g. large hydrophobic residues in the P1 and P4 positions, and Pro in the P2 position. Best known for its action on caseins, although it has been shown to hydrolyze hemoglobin and oxidized insulin B-chain.. In terms of biological role, protease which breaks down milk proteins during the growth of the bacteria on milk. The protein is PI-type proteinase (prtP) of Lactococcus lactis subsp. cremoris (Streptococcus cremoris).